Here is a 503-residue protein sequence, read N- to C-terminus: Probable zinc metalloprotease UREG_01421 (503 aa).

The signal sequence occupies residues 1–24 (MHSLSSALAGSTFVLLFLCLLASA). N-linked (GlcNAc...) asparagine glycosylation is present at N105. Zn(2+)-binding residues include H176, D196, and E232. N-linked (GlcNAc...) asparagine glycosylation occurs at N247. Zn(2+) is bound at residue D259. Positions 416–503 (MPRNVRVSTR…RGVAVLPFPA (88 aa)) constitute a Fibronectin type-III domain. Residue N429 is glycosylated (N-linked (GlcNAc...) asparagine).

It belongs to the peptidase M28 family. M28B subfamily. Zn(2+) serves as cofactor.

It localises to the secreted. This is Probable zinc metalloprotease UREG_01421 from Uncinocarpus reesii (strain UAMH 1704).